The following is a 530-amino-acid chain: T-complex protein 1 subunit gamma (530 aa).

Belongs to the TCP-1 chaperonin family. Heterooligomeric complex of about 850 to 900 kDa that forms two stacked rings, 12 to 16 nm in diameter.

The protein localises to the cytoplasm. In terms of biological role, molecular chaperone; assists the folding of proteins upon ATP hydrolysis. Known to play a role, in vitro, in the folding of actin and tubulin. This chain is T-complex protein 1 subunit gamma (cct3), found in Dictyostelium discoideum (Social amoeba).